A 469-amino-acid polypeptide reads, in one-letter code: MGLLSKKASCNTHGQDSSYFWGWEEYEKNPYDEIKNPDGIIQMGLAENQLSFDLIESWLAKNPDAANFQREGQSIFRELALFQDYHGLPSFKNAMADFMSENRGNRVSFNPNKLVLTAGATPANETLMFCLADPGDAFLLPTPYYPGFDRDLKWRTGAEIVPIQCKSANGFRITKVALEEAYEQAQKLNLKVKGVLITNPSNPLGTTTTRTELNHLLDFISRKKIHLISDEIYSGTVFTNPGFISVMEVLKDRKLENTDVFDRVHIVYSLSKDLGLPGFRVGVIYSNDDFVVSAATKMSSFGLISSQTQYLLSALLSDKTFTKNYLEENQIRLKNRHKKLVSGLEAAGIECLKSNAGLFCWVDMRHLLKSNTFEAEIELWKKIVYEVKLNISPGSSCHCNEPGWFRVCFANLSEETLKVALDRLKRFVDGPSPTRRSQSEHQRLKNLRKMKVSNWVFRLSFHDREPEER.

2 residues coordinate substrate: glutamate 47 and tyrosine 85. Lysine 272 is subject to N6-(pyridoxal phosphate)lysine.

Belongs to the class-I pyridoxal-phosphate-dependent aminotransferase family. In terms of assembly, homodimer and heterodimer. In vivo, the relevance of heterodimerization with other ACS enzymes is however unsure. Interacts with GRF3. Pyridoxal 5'-phosphate serves as cofactor. May be processed at its C-terminus. In terms of tissue distribution, expressed in roots. Expressed at low level in flowers and siliques.

The enzyme catalyses S-adenosyl-L-methionine = 1-aminocyclopropane-1-carboxylate + S-methyl-5'-thioadenosine + H(+). Its pathway is alkene biosynthesis; ethylene biosynthesis via S-adenosyl-L-methionine; ethylene from S-adenosyl-L-methionine: step 1/2. Functionally, 1-aminocyclopropane-1-carboxylate synthase (ACS) enzymes catalyze the conversion of S-adenosyl-L-methionine (SAM) into 1-aminocyclopropane-1-carboxylate (ACC), a direct precursor of ethylene. The sequence is that of 1-aminocyclopropane-1-carboxylate synthase 8 (ACS8) from Arabidopsis thaliana (Mouse-ear cress).